A 159-amino-acid polypeptide reads, in one-letter code: Globin D, coelomic (159 aa).

The residue at position 2 (glycine 2) is an N-acetylglycine. One can recognise a Globin domain in the interval 12–158; the sequence is DLTPAEKDLI…VQGVLITKHA (147 aa). Positions 74 and 105 each coordinate heme b.

This sequence belongs to the globin family. As to quaternary structure, homodimer.

This is Globin D, coelomic from Molpadia arenicola (Sea cucumber).